We begin with the raw amino-acid sequence, 626 residues long: UvrABC system protein C (626 aa).

The region spanning 26 to 105 (QEPGVYFMGD…IKQHQPHFNV (80 aa)) is the GIY-YIG domain. The UVR domain occupies 215–250 (QELHQLLTQQMEKAAADLKFEQAALIRDQINSLGKL).

This sequence belongs to the UvrC family. Interacts with UvrB in an incision complex.

The protein resides in the cytoplasm. Functionally, the UvrABC repair system catalyzes the recognition and processing of DNA lesions. UvrC both incises the 5' and 3' sides of the lesion. The N-terminal half is responsible for the 3' incision and the C-terminal half is responsible for the 5' incision. In Synechocystis sp. (strain ATCC 27184 / PCC 6803 / Kazusa), this protein is UvrABC system protein C.